The following is a 76-amino-acid chain: Adropin (76 aa).

The signal sequence occupies residues 1 to 33; the sequence is MGAAISQGALIAIVCNGLVGFLLLLLWVILCWA. A disordered region spans residues 41–76; sequence VDSLSESSPNSSPGPCPEKAPPPQKPSHEGSYLLQP. Over residues 52 to 65 the composition is skewed to pro residues; the sequence is SPGPCPEKAPPPQK.

As to expression, expressed in liver and brain.

It is found in the secreted. Involved in the regulation of glucose homeostasis and lipid metabolism. In Homo sapiens (Human), this protein is Adropin (ENHO).